The primary structure comprises 486 residues: Zinc finger chaperone ZPR1 (486 aa).

A disordered region spans residues 1 to 31 (MSEQKEDLFKPVGEAAAEVEDESIAEQNKAN). Serine 23 is modified (phosphoserine). 2 C4-type zinc fingers span residues 54 to 86 (CMNC…CPHC) and 295 to 327 (CPSC…CDHC). Threonine 407 carries the post-translational modification Phosphothreonine.

It belongs to the ZPR1 family. As to quaternary structure, interacts with elongation factor 1-alpha.

It is found in the cytoplasm. The protein resides in the nucleus. Its function is as follows. Acts as a protein folding chaperone for elongation factor 1-alpha. This chain is Zinc finger chaperone ZPR1, found in Saccharomyces cerevisiae (strain ATCC 204508 / S288c) (Baker's yeast).